A 708-amino-acid chain; its full sequence is ATP-dependent DNA helicase Hel308 (708 aa).

Residues glutamine 28 and 46 to 53 contribute to the ATP site; that span reads TATASGKS. Residues 33–198 form the Helicase ATP-binding domain; it reads RAGIFDGRSV…WLGARLVESS (166 aa). Positions 143–146 match the DEAH box motif; that stretch reads DEIH. Residues 231–429 form the Helicase C-terminal domain; the sequence is EVALAVDAVA…EPNLRAHVLG (199 aa).

Belongs to the helicase family. Hel308 subfamily. As to quaternary structure, monomer.

The catalysed reaction is Couples ATP hydrolysis with the unwinding of duplex DNA by translocating in the 3'-5' direction.. The enzyme catalyses ATP + H2O = ADP + phosphate + H(+). Functionally, DNA-dependent ATPase and 3'-5' DNA helicase that may be involved in repair of stalled replication forks. In Pyrobaculum calidifontis (strain DSM 21063 / JCM 11548 / VA1), this protein is ATP-dependent DNA helicase Hel308.